We begin with the raw amino-acid sequence, 339 residues long: Delta(9)-fatty-acid desaturase fat-6 (339 aa).

4 helical membrane-spanning segments follow: residues 52-72 (VALF…LIFE), 77-97 (TVIF…AGAH), 195-215 (YFPL…VYFW), and 219-241 (AFIA…TWCI).

The protein belongs to the fatty acid desaturase type 1 family. As to expression, expressed in the intestine in adult worms and in all four larval stages. Additional expression in the hypodermis in all life stages.

The protein localises to the membrane. It carries out the reaction octadecanoyl-CoA + 2 Fe(II)-[cytochrome b5] + O2 + 2 H(+) = (9Z)-octadecenoyl-CoA + 2 Fe(III)-[cytochrome b5] + 2 H2O. The catalysed reaction is hexadecanoyl-CoA + 2 Fe(II)-[cytochrome b5] + O2 + 2 H(+) = (9Z)-hexadecenoyl-CoA + 2 Fe(III)-[cytochrome b5] + 2 H2O. It catalyses the reaction heptadecanoyl-CoA + 2 Fe(II)-[cytochrome b5] + O2 + 2 H(+) = (9Z)-heptadecenoyl-CoA + 2 Fe(III)-[cytochrome b5] + 2 H2O. The enzyme catalyses (11E)-octadecenoyl-CoA + 2 Fe(II)-[cytochrome b5] + O2 + 2 H(+) = (9Z,11E)-octadecadienoyl-CoA + 2 Fe(III)-[cytochrome b5] + 2 H2O. Its pathway is lipid metabolism; monounsaturated fatty acid biosynthesis. The protein operates within lipid metabolism; fatty acid metabolism. Functionally, delta(9)-fatty acid desaturase that acts preferentially on stearoyl-CoA (octadecanoyl-CoA) producing the monounsaturated oleoyl-CoA ((9Z)-octadecenoyl-CoA), one of the most abundant monounsaturated fatty acid in Caenorhabditis elegans phospholipids and triacylglycerols. Also acts on palmitoyl-CoA (hexadecanoyl-CoA), heptadecanoyl-CoA and (11E)-octadecenoyl-CoA (trans-vaccenoyl-CoA), the monounsaturated fatty acids (MUFAs) produced are further used as substrates to synthesize polyunsaturated fatty acids (PUFAs) by several other desaturases and elongases. Unlike plants, Caenorhabditis elegans desaturases seem to use fatty acyl-CoAs as substrates. The sequence is that of Delta(9)-fatty-acid desaturase fat-6 (fat-6) from Caenorhabditis elegans.